A 210-amino-acid chain; its full sequence is uncharacterized protein (210 aa).

Helical transmembrane passes span 9–29 (WVVT…IIAK), 35–55 (LIVN…MAWP), 64–84 (GPAV…VVAV), 91–111 (GLYG…AAMN), 149–169 (IWFS…AVFW), and 190–210 (IGQA…LFPV).

Its subcellular location is the cell membrane. This is an uncharacterized protein from Mycobacterium bovis (strain ATCC BAA-935 / AF2122/97).